The chain runs to 300 residues: Ornithine carbamoyltransferase (300 aa).

Residues Ser51–Thr54, Gln78, Arg102, and His129–Gln132 each bind carbamoyl phosphate. Residues Asn160, Asp217, and Ser221–Met222 contribute to the L-ornithine site. Carbamoyl phosphate-binding positions include Cys257–Leu258 and Arg285.

This sequence belongs to the aspartate/ornithine carbamoyltransferase superfamily. OTCase family.

It is found in the cytoplasm. It catalyses the reaction carbamoyl phosphate + L-ornithine = L-citrulline + phosphate + H(+). It functions in the pathway amino-acid biosynthesis; L-arginine biosynthesis; L-arginine from L-ornithine and carbamoyl phosphate: step 1/3. In terms of biological role, reversibly catalyzes the transfer of the carbamoyl group from carbamoyl phosphate (CP) to the N(epsilon) atom of ornithine (ORN) to produce L-citrulline. This Halorhodospira halophila (strain DSM 244 / SL1) (Ectothiorhodospira halophila (strain DSM 244 / SL1)) protein is Ornithine carbamoyltransferase.